A 294-amino-acid chain; its full sequence is Putative maltodextrin utilization protein YvdJ (294 aa).

4 helical membrane-spanning segments follow: residues 35–55 (LSFL…VSFV), 184–204 (MIMM…TFVL), 228–248 (IAIC…MVHF), and 249–269 (DLIT…SFAF).

It localises to the cell membrane. In terms of biological role, could have a role in maltodextrin utilization. The sequence is that of Putative maltodextrin utilization protein YvdJ (yvdJ) from Bacillus subtilis (strain 168).